A 173-amino-acid chain; its full sequence is Small ribosomal subunit protein uS13 (173 aa).

Residues 130 to 143 (GVRHKRGQKVRGQR) show a composition bias toward basic residues. Positions 130–155 (GVRHKRGQKVRGQRTKSTGRTEGTIG) are disordered.

Belongs to the universal ribosomal protein uS13 family. Part of the 30S ribosomal subunit. Forms a loose heterodimer with protein S19. Forms two bridges to the 50S subunit in the 70S ribosome.

Its function is as follows. Located at the top of the head of the 30S subunit, it contacts several helices of the 16S rRNA. In the 70S ribosome it contacts the 23S rRNA (bridge B1a) and protein L5 of the 50S subunit (bridge B1b), connecting the 2 subunits; these bridges are implicated in subunit movement. The protein is Small ribosomal subunit protein uS13 of Haloquadratum walsbyi (strain DSM 16790 / HBSQ001).